Reading from the N-terminus, the 706-residue chain is 1,4-alpha-glucan-branching enzyme (706 aa).

Positions 96 and 133 each coordinate (1,4-alpha-D-glucosyl)n. Residue Asp-358 is the Nucleophile of the active site. Glu-419 (proton donor) is an active-site residue.

This sequence belongs to the glycosyl hydrolase 13 family. GlgB subfamily. Monomer.

It localises to the cytoplasm. It carries out the reaction Transfers a segment of a (1-&gt;4)-alpha-D-glucan chain to a primary hydroxy group in a similar glucan chain.. It participates in glycan biosynthesis; glycogen biosynthesis. Glycogen-branching enzyme participates in the glycogen biosynthetic process along with glycogenin and glycogen synthase. Generates alpha-1,6-glucosidic branches from alpha-1,4-linked glucose chains, to increase solubility of the glycogen polymer. In Candida glabrata (strain ATCC 2001 / BCRC 20586 / JCM 3761 / NBRC 0622 / NRRL Y-65 / CBS 138) (Yeast), this protein is 1,4-alpha-glucan-branching enzyme (GLC3).